The primary structure comprises 65 residues: Light-harvesting protein B800/830/1020 alpha-2 chain (65 aa).

Residues 1–13 (MWKLWKFVDFRMT) are Cytoplasmic-facing. A helical transmembrane segment spans residues 14 to 34 (AVGFHIFFALIAFAVHFACIS). Histidine 29 is an a bacteriochlorophyll binding site. The Periplasmic portion of the chain corresponds to 35 to 65 (SERFNWLEGAPAAEYYMDENPGIWKRTSYDG).

It belongs to the antenna complex alpha subunit family. In terms of assembly, the core complex is formed by different alpha and beta chains, binding bacteriochlorophyll molecules, and arranged most probably in tetrameric structures disposed around the reaction center. The non-pigmented gamma chains may constitute additional components.

The protein localises to the cell inner membrane. Antenna complexes are light-harvesting systems, which transfer the excitation energy to the reaction centers. This Halorhodospira halochloris (Ectothiorhodospira halochloris) protein is Light-harvesting protein B800/830/1020 alpha-2 chain.